The chain runs to 665 residues: MADVLSRFNSGKLWDFKGGIHPPEMKSQSNSQPLRHLPLGTDFYIPLKQHLGTTGNLLIKEGDYVLKGQALTKGDGLRMLPVHAPTSGTIKSIKPYVATHPSGLDEPTIHLQADGLDQWIERNPIDDFSTLSPEQLIHKIYQAGIAGLGGAVFPTAAKIQSAEQKVKLLIINGAECEPYITCDDRLMRERADEIIKGIRILRYILHPEKVVIAIEDNKPEAISAIRTALQGANDISIRVIPTKYPSGATKQLIYLLTGIEVPSGARSSSIGVLMQNVGTMFAIKRAIINDEPLIERVVTLTGNKIAEKGNYWVRLGTPISQILSDAGYQFDKHFPIFAGGPMMGLELPNLNAPVTKLVNCLLAPDYLEYAEPEAEQACIRCSSCSDACPVNLMPQQLYWFARSEDHKKSEEYALKDCIECGICAYVCPSHIPLIQYFRQEKAKIWQIKEKQKKSDEAKIRFEAKQARMEREEQERKARSQRAAQARREELAQTKGEDPVKAALERLKAKKANETEPTQIKTLTSEKGEVLPDNTDLMAQRKARRLARQQAASQVENQEQQTQPTDAKKAAVAAAIARAKAKKLAQTNSTSEAISNSQTAENEVEKTKSAVEKTEENSTALDPKKAAVAAAIARAKAKKLAQANSTSEAISNSQTAENEVEKQIVR.

4Fe-4S ferredoxin-type domains are found at residues 368 to 398 (EYAE…QQLY) and 408 to 437 (KSEE…IQYF). Residues cysteine 378, cysteine 381, cysteine 384, cysteine 388, cysteine 417, cysteine 420, cysteine 423, and cysteine 427 each coordinate [4Fe-4S] cluster. Composition is skewed to basic and acidic residues over residues 465 to 477 (QARM…ERKA) and 485 to 513 (ARRE…KANE). 3 disordered regions span residues 465-568 (QARM…DAKK), 580-623 (AKKL…LDPK), and 637-665 (KKLA…QIVR). 2 stretches are compositionally biased toward polar residues: residues 554 to 564 (VENQEQQTQPT) and 585 to 600 (QTNS…QTAE). A compositionally biased stretch (basic and acidic residues) spans 602–615 (EVEKTKSAVEKTEE). Residues 643 to 656 (NSTSEAISNSQTAE) are compositionally biased toward polar residues.

Belongs to the 4Fe4S bacterial-type ferredoxin family. RnfC subfamily. The complex is composed of six subunits: RnfA, RnfB, RnfC, RnfD, RnfE and RnfG. The cofactor is [4Fe-4S] cluster.

It is found in the cell inner membrane. Part of a membrane-bound complex that couples electron transfer with translocation of ions across the membrane. This is Ion-translocating oxidoreductase complex subunit C from Haemophilus influenzae (strain 86-028NP).